The sequence spans 314 residues: DNA-directed RNA polymerase subunit alpha (314 aa).

The tract at residues 1–228 (MIEIEKPVIE…EHLNIFVGLT (228 aa)) is alpha N-terminal domain (alpha-NTD). Residues 245–314 (KEKVLEMTIE…ELGLGLRKEE (70 aa)) form an alpha C-terminal domain (alpha-CTD) region.

Belongs to the RNA polymerase alpha chain family. As to quaternary structure, homodimer. The RNAP catalytic core consists of 2 alpha, 1 beta, 1 beta' and 1 omega subunit. When a sigma factor is associated with the core the holoenzyme is formed, which can initiate transcription.

The enzyme catalyses RNA(n) + a ribonucleoside 5'-triphosphate = RNA(n+1) + diphosphate. DNA-dependent RNA polymerase catalyzes the transcription of DNA into RNA using the four ribonucleoside triphosphates as substrates. This chain is DNA-directed RNA polymerase subunit alpha, found in Halalkalibacterium halodurans (strain ATCC BAA-125 / DSM 18197 / FERM 7344 / JCM 9153 / C-125) (Bacillus halodurans).